The chain runs to 361 residues: S-adenosylmethionine decarboxylase proenzyme (361 aa).

Active-site residues include E11 and E14. S71 functions as the Schiff-base intermediate with substrate; via pyruvic acid in the catalytic mechanism. S71 carries the pyruvic acid (Ser); by autocatalysis modification. Residue C85 is the Proton donor; for catalytic activity of the active site. Active-site proton acceptor; for processing activity residues include S234 and H247.

Belongs to the eukaryotic AdoMetDC family. Requires pyruvate as cofactor. Post-translationally, is synthesized initially as an inactive proenzyme. Formation of the active enzyme involves a self-maturation process in which the active site pyruvoyl group is generated from an internal serine residue via an autocatalytic post-translational modification. Two non-identical subunits are generated from the proenzyme in this reaction, and the pyruvate is formed at the N-terminus of the alpha chain, which is derived from the carboxyl end of the proenzyme. The post-translation cleavage follows an unusual pathway, termed non-hydrolytic serinolysis, in which the side chain hydroxyl group of the serine supplies its oxygen atom to form the C-terminus of the beta chain, while the remainder of the serine residue undergoes an oxidative deamination to produce ammonia and the pyruvoyl group blocking the N-terminus of the alpha chain.

The catalysed reaction is S-adenosyl-L-methionine + H(+) = S-adenosyl 3-(methylsulfanyl)propylamine + CO2. It functions in the pathway amine and polyamine biosynthesis; S-adenosylmethioninamine biosynthesis; S-adenosylmethioninamine from S-adenosyl-L-methionine: step 1/1. This is S-adenosylmethionine decarboxylase proenzyme (SAMDC) from Daucus carota (Wild carrot).